A 2963-amino-acid chain; its full sequence is tRNA nuclease CdiA (2963 aa).

Positions 1–29 (MIPIYLRQKLISYALIYLVAIQPIMPVMA) are cleaved as a signal peptide. Residues 35-320 (AQGSTALDKA…AQGNITLNSH (286 aa)) are two-partner system transport domain (TPS). The interval 573–1074 (GNVVAQEHAQ…MVLNTASLLN (502 aa)) is FHA-1. Residues 1075 to 1342 (RRDGFSVTEK…KPLTRAQLSD (268 aa)) form a receptor binding domain (RBD) region. A YP domain region spans residues 1343-1528 (YPLPDSNNGL…LAKAEQAHLQ (186 aa)). The interval 1529–1751 (GSVISGNKVE…ATLQAERDVN (223 aa)) is periplasmic FHA-1 repeat (pFR). A compositionally biased stretch (basic and acidic residues) spans 1759–1770 (TRNQHIDSEDKT). Disordered regions lie at residues 1759–1787 (TRNQHIDSEDKTTGYTRSTLSSGGDLTAS) and 1992–2012 (SKSSRQQINQEGSKQSESASA). The interval 1762 to 2314 (QHIDSEDKTT…DSDNYNSIQK (553 aa)) is FHA-2. Positions 1771–1782 (TGYTRSTLSSGG) are enriched in polar residues. Residues 2694-2697 (VEDN) carry the VEDN CT cleavage motif motif. Positions 2694–2963 (VEDNNLSFGK…TGRVRNFHPN (270 aa)) are C-terminal effector domain (CT).

In the N-terminal section; belongs to the CdiA toxin family. The protein in the C-terminal section; belongs to the bacterial EndoU family. Forms a 1:1 complex with cognate immunity protein CdiI.

The protein resides in the secreted. Its subcellular location is the target cell. The protein localises to the target cell cytoplasm. In terms of biological role, toxic component of a toxin-immunity protein module, which functions as a cellular contact-dependent growth inhibition (CDI) system. CDI modules allow bacteria to communicate with and inhibit the growth of closely related neighboring bacteria in a contact-dependent fashion. Targeting of the CT domain (residues 2824-2963) in the absence of immunity protein inhibits cell growth and causes tRNA(UUC-Glu) cleavage in the anticodon loop; expression of cognate immunity protein CdiI-43969 neutralizes growth inhibition and tRNA(UUC-Glu) remains intact, whereas non-cognate immunity proteins do not confer protection from the toxic effects. Its function is as follows. The CdiA protein is thought to be exported from the cell through the central lumen of CdiB, the other half of its two-partner system (TPS). The TPS domain probably remains associated with CdiB while the FHA-1 domain forms an extended filament with the receptor-binding domain (RBD) at its extremity; in the secretion arrested state the C-terminus of the RBD and YP domains form a hairpin-like structure as the FHA-2, PT and CT domains are periplasmic. The YP domain is probably responsible for this arrest at the point where it re-enters the host cell periplasm. Upon binding to a target cell outer membrane receptor a signal is transmitted to activate secretion. The filament elongates slightly, the rest of CdiA is secreted and the FHA-2 domain becomes stably associated with the target cell's outer membrane where it facilitates entry of the toxic CT domain into the target cell periplasm. From there the toxic CT domain is cleaved and gains access to the target cell cytoplasm via an inner membrane protein. In Yersinia mollaretii (strain ATCC 43969 / DSM 18520 / CIP 103324 / CNY 7263 / WAIP 204), this protein is tRNA nuclease CdiA.